We begin with the raw amino-acid sequence, 284 residues long: Homeobox protein SIX1 (284 aa).

Positions 124–183 (GEETSYCFKEKSRGVLREWYAHNPYPSPREKRELAEATGLTTTQVSNWFKNRRQRDRAAE) form a DNA-binding region, homeobox. A disordered region spans residues 168–271 (VSNWFKNRRQ…AHQHQLQDSL (104 aa)). Basic and acidic residues predominate over residues 179–190 (DRAAEAKERENT). The segment covering 242–271 (RSSNYSLPGLTASQPSHGLQAHQHQLQDSL) has biased composition (polar residues).

This sequence belongs to the SIX/Sine oculis homeobox family. Interacts with DACH1. Interacts with EYA1. Interacts with EYA2. Interacts with CDH1. Interacts with TBX18. Interacts with CEBPA. Interacts with CEBPB. Interacts with EBF2. In terms of processing, phosphorylated during interphase; becomes hyperphosphorylated during mitosis. Hyperphosphorylation impairs binding to promoter elements. Post-translationally, ubiquitinated by the anaphase promoting complex (APC), leading to its proteasomal degradation.

The protein localises to the nucleus. It is found in the cytoplasm. Transcription factor that is involved in the regulation of cell proliferation, apoptosis and embryonic development. Plays an important role in the development of several organs, including kidney, muscle and inner ear. Depending on context, functions as a transcriptional repressor or activator. Lacks an activation domain, and requires interaction with EYA family members for transcription activation. Mediates nuclear translocation of EYA1 and EYA2. Binds the 5'-TCA[AG][AG]TTNC-3' motif present in the MEF3 element in the MYOG promoter and CIDEA enhancer. Regulates the expression of numerous genes, including MYC, CCNA1, CCND1 and EZR. Acts as an activator of the IGFBP5 promoter, probably coactivated by EYA2. Repression of precursor cell proliferation in myoblasts is switched to activation through recruitment of EYA3 to the SIX1-DACH1 complex. During myogenesis, seems to act together with EYA2 and DACH2. Regulates the expression of CCNA1. Promotes brown adipocyte differentiation. The chain is Homeobox protein SIX1 (SIX1) from Lagothrix lagotricha (Brown woolly monkey).